The chain runs to 85 residues: Colicin-E6 immunity protein (85 aa).

It belongs to the cloacin immunity protein family.

This protein inhibits the 16S RNA hydrolyzing activity of colicin E6 by binding with high affinity to the C-terminal catalytic domain of E6. This protein is able to protect a cell, which harbors the plasmid ColE6 against colicin E6. The polypeptide is Colicin-E6 immunity protein (imm) (Escherichia coli).